Reading from the N-terminus, the 306-residue chain is Glutamyl-Q tRNA(Asp) synthetase (306 aa).

Residues 4-8 (RYAPS) and Glu-40 contribute to the L-glutamate site. The short motif at 7 to 17 (PSPSGDLHFGN) is the 'HIGH' region element. Zn(2+)-binding residues include Cys-92, Cys-94, Tyr-113, and Cys-117. L-glutamate contacts are provided by Tyr-180 and Arg-198. Residues 236 to 240 (RLAKR) carry the 'KMSKS' region motif. Position 239 (Lys-239) interacts with ATP.

Belongs to the class-I aminoacyl-tRNA synthetase family. GluQ subfamily. It depends on Zn(2+) as a cofactor.

In terms of biological role, catalyzes the tRNA-independent activation of glutamate in presence of ATP and the subsequent transfer of glutamate onto a tRNA(Asp). Glutamate is transferred on the 2-amino-5-(4,5-dihydroxy-2-cyclopenten-1-yl) moiety of the queuosine in the wobble position of the QUC anticodon. The chain is Glutamyl-Q tRNA(Asp) synthetase from Corynebacterium efficiens (strain DSM 44549 / YS-314 / AJ 12310 / JCM 11189 / NBRC 100395).